Consider the following 102-residue polypeptide: Large ribosomal subunit protein bL21 (102 aa).

This sequence belongs to the bacterial ribosomal protein bL21 family. In terms of assembly, part of the 50S ribosomal subunit. Contacts protein L20.

Functionally, this protein binds to 23S rRNA in the presence of protein L20. The sequence is that of Large ribosomal subunit protein bL21 from Lachnoclostridium phytofermentans (strain ATCC 700394 / DSM 18823 / ISDg) (Clostridium phytofermentans).